Reading from the N-terminus, the 673-residue chain is Cyclic nucleotide-binding domain-containing protein 2 (673 aa).

The span at 1–15 (MNRSANPEAASSTSH) shows a compositional bias: polar residues. The interval 1-89 (MNRSANPEAA…PQPKDRPGVQ (89 aa)) is disordered. Over residues 43 to 86 (PADKSDTTESKSESGSDSRSEEDKESPASIKEIKAETPQPKDRP) the composition is skewed to basic and acidic residues. 206-329 (CYRSYTESLQ…ETQYRYNFFR (124 aa)) contributes to the a nucleoside 3',5'-cyclic phosphate binding site.

Testis-specific. Exclusively expressed in testicular germ cells while it is not present in mature sperm (at protein level).

It is found in the cytoplasm. It localises to the cytosol. Essential for male fertility. Plays an important role in spermatogenesis and regulates sperm motility by controlling the development of the flagellar bending of sperm. The polypeptide is Cyclic nucleotide-binding domain-containing protein 2 (Cnbd2) (Mus musculus (Mouse)).